We begin with the raw amino-acid sequence, 241 residues long: Phosphoribosylaminoimidazole-succinocarboxamide synthase (241 aa).

The protein belongs to the SAICAR synthetase family.

The enzyme catalyses 5-amino-1-(5-phospho-D-ribosyl)imidazole-4-carboxylate + L-aspartate + ATP = (2S)-2-[5-amino-1-(5-phospho-beta-D-ribosyl)imidazole-4-carboxamido]succinate + ADP + phosphate + 2 H(+). The protein operates within purine metabolism; IMP biosynthesis via de novo pathway; 5-amino-1-(5-phospho-D-ribosyl)imidazole-4-carboxamide from 5-amino-1-(5-phospho-D-ribosyl)imidazole-4-carboxylate: step 1/2. This is Phosphoribosylaminoimidazole-succinocarboxamide synthase from Methanoculleus marisnigri (strain ATCC 35101 / DSM 1498 / JR1).